We begin with the raw amino-acid sequence, 100 residues long: Urease subunit gamma (100 aa).

This sequence belongs to the urease gamma subunit family. As to quaternary structure, heterotrimer of UreA (gamma), UreB (beta) and UreC (alpha) subunits. Three heterotrimers associate to form the active enzyme.

Its subcellular location is the cytoplasm. The catalysed reaction is urea + 2 H2O + H(+) = hydrogencarbonate + 2 NH4(+). It participates in nitrogen metabolism; urea degradation; CO(2) and NH(3) from urea (urease route): step 1/1. This Agrobacterium fabrum (strain C58 / ATCC 33970) (Agrobacterium tumefaciens (strain C58)) protein is Urease subunit gamma.